The chain runs to 233 residues: Leucyl/phenylalanyl-tRNA--protein transferase (233 aa).

It belongs to the L/F-transferase family.

The protein localises to the cytoplasm. It carries out the reaction N-terminal L-lysyl-[protein] + L-leucyl-tRNA(Leu) = N-terminal L-leucyl-L-lysyl-[protein] + tRNA(Leu) + H(+). The enzyme catalyses N-terminal L-arginyl-[protein] + L-leucyl-tRNA(Leu) = N-terminal L-leucyl-L-arginyl-[protein] + tRNA(Leu) + H(+). It catalyses the reaction L-phenylalanyl-tRNA(Phe) + an N-terminal L-alpha-aminoacyl-[protein] = an N-terminal L-phenylalanyl-L-alpha-aminoacyl-[protein] + tRNA(Phe). In terms of biological role, functions in the N-end rule pathway of protein degradation where it conjugates Leu, Phe and, less efficiently, Met from aminoacyl-tRNAs to the N-termini of proteins containing an N-terminal arginine or lysine. The polypeptide is Leucyl/phenylalanyl-tRNA--protein transferase (Chromobacterium violaceum (strain ATCC 12472 / DSM 30191 / JCM 1249 / CCUG 213 / NBRC 12614 / NCIMB 9131 / NCTC 9757 / MK)).